The sequence spans 446 residues: Glutamine synthetase (446 aa).

In terms of domain architecture, GS beta-grasp spans 14–106; the sequence is NNVKFIRFQF…VICDVYTTNG (93 aa). The 334-residue stretch at 113-446 folds into the GS catalytic domain; the sequence is PRGCLKRVLA…DWETKQYLKI (334 aa). 2 residues coordinate Mg(2+): glutamate 137 and glutamate 139. Glutamate 187 lines the ATP pocket. Mg(2+) contacts are provided by glutamate 192 and glutamate 199. L-glutamate is bound by residues 243 to 244 and glycine 244; that span reads NG. Histidine 248 contacts Mg(2+). Residues 250 to 252 and serine 252 each bind ATP; that span reads HQS. Positions 301, 307, and 319 each coordinate L-glutamate. ATP-binding residues include arginine 319, arginine 324, and lysine 331. Mg(2+) is bound at residue glutamate 336. Arginine 338 contacts L-glutamate.

Belongs to the glutamine synthetase family. Oligomer of 12 subunits arranged in the form of two hexagons. It depends on Mg(2+) as a cofactor.

It localises to the cytoplasm. It carries out the reaction L-glutamate + NH4(+) + ATP = L-glutamine + ADP + phosphate + H(+). In terms of biological role, probably involved in nitrogen metabolism via ammonium assimilation. Catalyzes the ATP-dependent biosynthesis of glutamine from glutamate and ammonia. In Methanococcus maripaludis (strain DSM 14266 / JCM 13030 / NBRC 101832 / S2 / LL), this protein is Glutamine synthetase.